Reading from the N-terminus, the 119-residue chain is Large ribosomal subunit protein bL20 (119 aa).

This sequence belongs to the bacterial ribosomal protein bL20 family.

Functionally, binds directly to 23S ribosomal RNA and is necessary for the in vitro assembly process of the 50S ribosomal subunit. It is not involved in the protein synthesizing functions of that subunit. The chain is Large ribosomal subunit protein bL20 from Azorhizobium caulinodans (strain ATCC 43989 / DSM 5975 / JCM 20966 / LMG 6465 / NBRC 14845 / NCIMB 13405 / ORS 571).